The chain runs to 466 residues: Probable Xaa-Pro aminopeptidase pepP (466 aa).

4 residues coordinate Mn(2+): D264, D275, E398, and E438.

This sequence belongs to the peptidase M24B family. Mn(2+) serves as cofactor.

The enzyme catalyses Release of any N-terminal amino acid, including proline, that is linked to proline, even from a dipeptide or tripeptide.. In terms of biological role, catalyzes the removal of a penultimate prolyl residue from the N-termini of peptides. The sequence is that of Probable Xaa-Pro aminopeptidase pepP (pepP) from Aspergillus terreus (strain NIH 2624 / FGSC A1156).